The following is a 176-amino-acid chain: 2-C-methyl-D-erythritol 2,4-cyclodiphosphate synthase (176 aa).

The a divalent metal cation site is built by aspartate 23, histidine 25, and histidine 60. 23 to 25 (DSH) lines the 4-CDP-2-C-methyl-D-erythritol 2-phosphate pocket. Residue 149 to 152 (TSGE) coordinates 4-CDP-2-C-methyl-D-erythritol 2-phosphate.

This sequence belongs to the IspF family. Homotrimer. Requires a divalent metal cation as cofactor.

The enzyme catalyses 4-CDP-2-C-methyl-D-erythritol 2-phosphate = 2-C-methyl-D-erythritol 2,4-cyclic diphosphate + CMP. Its pathway is isoprenoid biosynthesis; isopentenyl diphosphate biosynthesis via DXP pathway; isopentenyl diphosphate from 1-deoxy-D-xylulose 5-phosphate: step 4/6. Its function is as follows. Involved in the biosynthesis of isopentenyl diphosphate (IPP) and dimethylallyl diphosphate (DMAPP), two major building blocks of isoprenoid compounds. Catalyzes the conversion of 4-diphosphocytidyl-2-C-methyl-D-erythritol 2-phosphate (CDP-ME2P) to 2-C-methyl-D-erythritol 2,4-cyclodiphosphate (ME-CPP) with a corresponding release of cytidine 5-monophosphate (CMP). In Chlamydia felis (strain Fe/C-56) (Chlamydophila felis), this protein is 2-C-methyl-D-erythritol 2,4-cyclodiphosphate synthase.